The chain runs to 306 residues: Dermonecrotic toxin LiSicTox-alphaIA2ai (306 aa).

An N-terminal signal peptide occupies residues 1 to 18 (MLPYIALILVCWSVLSQA). Residues 19–26 (AQTDVEGR) constitute a propeptide that is removed on maturation. Histidine 38 is an active-site residue. Positions 58 and 60 each coordinate Mg(2+). The active-site Nucleophile is the histidine 74. 2 disulfides stabilise this stretch: cysteine 78/cysteine 84 and cysteine 80/cysteine 223. Residue aspartate 118 coordinates Mg(2+). Residue asparagine 283 is glycosylated (N-linked (GlcNAc...) asparagine).

The protein belongs to the arthropod phospholipase D family. Class II subfamily. Class IIa sub-subfamily. Mg(2+) serves as cofactor. Expressed by the venom gland.

Its subcellular location is the secreted. The enzyme catalyses an N-(acyl)-sphingosylphosphocholine = an N-(acyl)-sphingosyl-1,3-cyclic phosphate + choline. It catalyses the reaction an N-(acyl)-sphingosylphosphoethanolamine = an N-(acyl)-sphingosyl-1,3-cyclic phosphate + ethanolamine. The catalysed reaction is a 1-acyl-sn-glycero-3-phosphocholine = a 1-acyl-sn-glycero-2,3-cyclic phosphate + choline. It carries out the reaction a 1-acyl-sn-glycero-3-phosphoethanolamine = a 1-acyl-sn-glycero-2,3-cyclic phosphate + ethanolamine. Dermonecrotic toxins cleave the phosphodiester linkage between the phosphate and headgroup of certain phospholipids (sphingolipid and lysolipid substrates), forming an alcohol (often choline) and a cyclic phosphate. This toxin acts on sphingomyelin (SM). It may also act on ceramide phosphoethanolamine (CPE), lysophosphatidylcholine (LPC) and lysophosphatidylethanolamine (LPE), but not on lysophosphatidylserine (LPS), and lysophosphatidylglycerol (LPG). It acts by transphosphatidylation, releasing exclusively cyclic phosphate products as second products. It induces complement-dependent hemolysis, dermonecrosis, vascular permeability and platelet aggregation. This Loxosceles intermedia (Brown spider) protein is Dermonecrotic toxin LiSicTox-alphaIA2ai.